The chain runs to 538 residues: Chaperonin GroEL (538 aa).

Residues 29 to 32 (TLGP), 86 to 90 (DGTTT), Gly413, 479 to 481 (DAL), and Asp495 contribute to the ATP site.

It belongs to the chaperonin (HSP60) family. In terms of assembly, forms a cylinder of 14 subunits composed of two heptameric rings stacked back-to-back. Interacts with the co-chaperonin GroES.

It localises to the cytoplasm. It catalyses the reaction ATP + H2O + a folded polypeptide = ADP + phosphate + an unfolded polypeptide.. In terms of biological role, together with its co-chaperonin GroES, plays an essential role in assisting protein folding. The GroEL-GroES system forms a nano-cage that allows encapsulation of the non-native substrate proteins and provides a physical environment optimized to promote and accelerate protein folding. The protein is Chaperonin GroEL of Thermotoga neapolitana.